A 179-amino-acid chain; its full sequence is ATP synthase subunit delta (179 aa).

Belongs to the ATPase delta chain family. In terms of assembly, F-type ATPases have 2 components, F(1) - the catalytic core - and F(0) - the membrane proton channel. F(1) has five subunits: alpha(3), beta(3), gamma(1), delta(1), epsilon(1). F(0) has three main subunits: a(1), b(2) and c(10-14). The alpha and beta chains form an alternating ring which encloses part of the gamma chain. F(1) is attached to F(0) by a central stalk formed by the gamma and epsilon chains, while a peripheral stalk is formed by the delta and b chains.

Its subcellular location is the cell membrane. Its function is as follows. F(1)F(0) ATP synthase produces ATP from ADP in the presence of a proton or sodium gradient. F-type ATPases consist of two structural domains, F(1) containing the extramembraneous catalytic core and F(0) containing the membrane proton channel, linked together by a central stalk and a peripheral stalk. During catalysis, ATP synthesis in the catalytic domain of F(1) is coupled via a rotary mechanism of the central stalk subunits to proton translocation. Functionally, this protein is part of the stalk that links CF(0) to CF(1). It either transmits conformational changes from CF(0) to CF(1) or is implicated in proton conduction. The protein is ATP synthase subunit delta of Staphylococcus carnosus (strain TM300).